The following is a 516-amino-acid chain: MLYSQRSRPRHREVTGPQPHSVAVVAKFPSSRPRDFAILERRRHEEAREQILTFTKLNTTERVKNKWARVTDQKLLHNMVQREVYRTMEEYKMHLNERRERLSTLLEREEMAYIKEMEAMEETTLERQAKMRERVKSLREKREKERMDFIAEKRDQQFREQCEELRSLRSQIHLNEVCTERMAQIVLKEELNRQRKEEDTIFDQLWEQDRLAKEEQEEKKRQKRIELNQEIACLQKAASEAQKMQEKRLKEEESKLMAEEQRLIKLEEERNLKEKQQNKLQVKSMLEDSIRLKMKRLAREQQEELALDMKILEHVMQGYQDDTEEKRQRKMELRKEQQLYREYLAQQLEEEKRQEREMDKMIEAELEKSWAKKSEQMRKEKEARKRLMKDVMDTRRVQIQEKLERNAKLQEELAHDKELLESATEEHKQLETDRNARQMKVAQQYQRDLVSQVAYQQSQRQAEREEEQREFEAGLTAEKAYQNKLREILSRPYVGHENIHPLRRGRISSPKDWLPQ.

2 coiled-coil regions span residues 217 to 283 and 316 to 440; these read EEKK…LQVK and MQGY…RQMK. 2 stretches are compositionally biased toward basic and acidic residues: residues 417-436 and 461-472; these read KELL…DRNA and QAEREEEQREFE. Disordered stretches follow at residues 417–443 and 455–475; these read KELL…KVAQ and YQQS…EAGL.

It belongs to the CFAP53 family.

It localises to the cytoplasm. It is found in the cytoskeleton. The protein localises to the cilium axoneme. The protein resides in the microtubule organizing center. Its subcellular location is the centrosome. It localises to the centriolar satellite. Its function is as follows. Microtubule inner protein (MIP) part of the dynein-decorated doublet microtubules (DMTs) in cilia axoneme, which is required for motile cilia beating. Regulates motility patterns of both 9+0 and 9+2 motile cilia through differential localization and recruitment of axonemal dynein components. Required for motile cilium formation and movement. Involved in the establishment of left-right symmetry during embryogenesis. This chain is Cilia- and flagella-associated protein 53, found in Xenopus laevis (African clawed frog).